We begin with the raw amino-acid sequence, 96 residues long: Large ribosomal subunit protein bL27 (96 aa).

The propeptide occupies 1-9; it reads MLRLDLQFF.

It belongs to the bacterial ribosomal protein bL27 family. Post-translationally, the N-terminus is cleaved by ribosomal processing cysteine protease Prp.

The protein is Large ribosomal subunit protein bL27 of Anoxybacillus flavithermus (strain DSM 21510 / WK1).